The chain runs to 539 residues: MTAQEVRLCGLLLQEHFGDVVENVGTHLIRNGVLTLRALAHETKLALDLVKKSLCVLVQHGMCTFGPGRRGPAGPVEYHINCEHILHMLRYPRYIYTAKSLYGDTGELIVEEILQRGQMTMSSTVKTVADRLTHNMPEGQSMDYNEVVSAFSRLVETHFLQRCPPMASAESSGTGSAETPPAVTQPSNPESHPDCYKLPYISLSGHGKRRRSSEDGEADQRAAKKAKTDSSECGDEGIHWQVNFERFHLHFRDQAIISAVSCKLDQTSGEIVRTMLRMSEVTTSANAAFTQALSANEIFRALPSNYNIARPILDQYLTLLVDDPMEFVGKAGDSGGGMFVVNLHRALANLARATLESVVQERFGSRSARIFRLLLRKRHLEQKQVEDFAMIPAKEAKEMLYTLLSENLVQLQEIPKTPDHAPSRTFYLYAVNQLPTARLLLQHCYKTVGNLIERRLYETKENKRLLEKSQRIEAILASLQATGAEATQLTEVEEMITAPERQQLESLRHHINKLDSGENQVDETIFLLESYINSTQASR.

The tract at residues 165 to 234 (PMASAESSGT…KAKTDSSECG (70 aa)) is disordered. A compositionally biased stretch (low complexity) spans 167-179 (ASAESSGTGSAET). Basic and acidic residues predominate over residues 212-230 (SSEDGEADQRAAKKAKTDS).

This sequence belongs to the eukaryotic RPC3/POLR3C RNA polymerase subunit family. Component of the RNA polymerase III (Pol III) complex consisting of 17 subunits.

It is found in the nucleus. Functionally, DNA-dependent RNA polymerase catalyzes the transcription of DNA into RNA using the four ribonucleoside triphosphates as substrates. Specific core component of RNA polymerase III which synthesizes small RNAs, such as 5S rRNA and tRNAs. This Danio rerio (Zebrafish) protein is DNA-directed RNA polymerase III subunit RPC3 (polr3c).